A 317-amino-acid chain; its full sequence is NADH kinase (317 aa).

This sequence belongs to the NAD kinase family. As to quaternary structure, homodimer. Ubiquitous.

Its subcellular location is the cytoplasm. The enzyme catalyses NADH + ATP = ADP + NADPH + H(+). Its activity is regulated as follows. Two-fold decrease in activity in the presence of PPi, iodoacetate or para-chloromercuribenzoate. In terms of biological role, phosphorylates specifically NADH. Can phosphorylate NAD with a 100-fold decrease in efficiency compared to NADH. Prefers ATP as nucleoside triphosphate substrate. Can also utilize UTP, GTP and CTP. Key source of the cellular reductant NADPH which is an important antioxidant factor. This Arabidopsis thaliana (Mouse-ear cress) protein is NADH kinase (NADK3).